The sequence spans 462 residues: tRNA modification GTPase MnmE (462 aa).

The (6S)-5-formyl-5,6,7,8-tetrahydrofolate site is built by Arg27, Glu89, and Arg128. The TrmE-type G domain maps to 224-383 (GLATAIVGRP…LDERIAKLFF (160 aa)). Position 234 (Asn234) interacts with K(+). Residues 234 to 239 (NVGKSS), 253 to 259 (TDVAGTT), and 278 to 281 (DTAG) contribute to the GTP site. Ser238 serves as a coordination point for Mg(2+). K(+) is bound by residues Thr253, Val255, and Thr258. Mg(2+) is bound at residue Thr259. Lys462 contacts (6S)-5-formyl-5,6,7,8-tetrahydrofolate.

The protein belongs to the TRAFAC class TrmE-Era-EngA-EngB-Septin-like GTPase superfamily. TrmE GTPase family. In terms of assembly, homodimer. Heterotetramer of two MnmE and two MnmG subunits. K(+) is required as a cofactor.

The protein localises to the cytoplasm. Functionally, exhibits a very high intrinsic GTPase hydrolysis rate. Involved in the addition of a carboxymethylaminomethyl (cmnm) group at the wobble position (U34) of certain tRNAs, forming tRNA-cmnm(5)s(2)U34. The chain is tRNA modification GTPase MnmE from Lacticaseibacillus paracasei (strain ATCC 334 / BCRC 17002 / CCUG 31169 / CIP 107868 / KCTC 3260 / NRRL B-441) (Lactobacillus paracasei).